The primary structure comprises 303 residues: Ribonuclease HIII (303 aa).

The RNase H type-2 domain occupies 89 to 303 (WSVLGSDEVG…ANTKKAERLL (215 aa)). Residues Asp95, Glu96, and Asp199 each coordinate a divalent metal cation.

It belongs to the RNase HII family. RnhC subfamily. Mn(2+) is required as a cofactor. Mg(2+) serves as cofactor.

It localises to the cytoplasm. It catalyses the reaction Endonucleolytic cleavage to 5'-phosphomonoester.. In terms of biological role, endonuclease that specifically degrades the RNA of RNA-DNA hybrids. The chain is Ribonuclease HIII from Leuconostoc mesenteroides subsp. mesenteroides (strain ATCC 8293 / DSM 20343 / BCRC 11652 / CCM 1803 / JCM 6124 / NCDO 523 / NBRC 100496 / NCIMB 8023 / NCTC 12954 / NRRL B-1118 / 37Y).